A 416-amino-acid polypeptide reads, in one-letter code: Enolase (416 aa).

Residue Gln-160 participates in (2R)-2-phosphoglycerate binding. Glu-204 acts as the Proton donor in catalysis. Residues Asp-239, Glu-282, and Asp-308 each contribute to the Mg(2+) site. Residues Lys-333, Arg-362, Ser-363, and Lys-384 each coordinate (2R)-2-phosphoglycerate. Lys-333 (proton acceptor) is an active-site residue.

It belongs to the enolase family. Requires Mg(2+) as cofactor.

The protein resides in the cytoplasm. Its subcellular location is the secreted. It is found in the cell surface. It carries out the reaction (2R)-2-phosphoglycerate = phosphoenolpyruvate + H2O. It participates in carbohydrate degradation; glycolysis; pyruvate from D-glyceraldehyde 3-phosphate: step 4/5. Its function is as follows. Catalyzes the reversible conversion of 2-phosphoglycerate (2-PG) into phosphoenolpyruvate (PEP). It is essential for the degradation of carbohydrates via glycolysis. This chain is Enolase, found in Metallosphaera sedula (strain ATCC 51363 / DSM 5348 / JCM 9185 / NBRC 15509 / TH2).